Consider the following 72-residue polypeptide: Palustrin-2CG1 (72 aa).

An N-terminal signal peptide occupies residues 1–22 (MFTMKKPLLLLFFLGTISLSLC). Residues 23–39 (QEERGADEDDGEMTEEV) constitute a propeptide, removed in mature form. A disulfide bridge connects residues Cys64 and Cys70.

As to expression, expressed by the skin glands.

The protein resides in the secreted. Functionally, antimicrobial peptide active against a variety of Gram-positive and some Gram-negative bacterial strains. Has antifungal activity against a slime mold isolate. Has hemolytic activity against human erythrocytes. The polypeptide is Palustrin-2CG1 (Amolops chunganensis (Chungan torrent frog)).